We begin with the raw amino-acid sequence, 159 residues long: Large ribosomal subunit protein uL30 (159 aa).

The protein belongs to the universal ribosomal protein uL30 family. As to quaternary structure, part of the 50S ribosomal subunit.

In Ignicoccus hospitalis (strain KIN4/I / DSM 18386 / JCM 14125), this protein is Large ribosomal subunit protein uL30.